The following is a 340-amino-acid chain: tRNA N6-adenosine threonylcarbamoyltransferase (340 aa).

Fe cation-binding residues include H114 and H118. Substrate-binding positions include 140–144 (TISGG), D173, G186, D190, and N281. Fe cation is bound at residue D309.

The protein belongs to the KAE1 / TsaD family. Requires Fe(2+) as cofactor.

It is found in the cytoplasm. It catalyses the reaction L-threonylcarbamoyladenylate + adenosine(37) in tRNA = N(6)-L-threonylcarbamoyladenosine(37) in tRNA + AMP + H(+). In terms of biological role, required for the formation of a threonylcarbamoyl group on adenosine at position 37 (t(6)A37) in tRNAs that read codons beginning with adenine. Is involved in the transfer of the threonylcarbamoyl moiety of threonylcarbamoyl-AMP (TC-AMP) to the N6 group of A37, together with TsaE and TsaB. TsaD likely plays a direct catalytic role in this reaction. This Christiangramia forsetii (strain DSM 17595 / CGMCC 1.15422 / KT0803) (Gramella forsetii) protein is tRNA N6-adenosine threonylcarbamoyltransferase.